Consider the following 166-residue polypeptide: Small ribosomal subunit protein uS5 (166 aa).

Residues 12–75 (YIEKLVQVNR…EAARRNMIQV (64 aa)) form the S5 DRBM domain.

Belongs to the universal ribosomal protein uS5 family. Part of the 30S ribosomal subunit. Contacts proteins S4 and S8.

With S4 and S12 plays an important role in translational accuracy. Functionally, located at the back of the 30S subunit body where it stabilizes the conformation of the head with respect to the body. This is Small ribosomal subunit protein uS5 from Pseudomonas fluorescens (strain ATCC BAA-477 / NRRL B-23932 / Pf-5).